We begin with the raw amino-acid sequence, 429 residues long: Zinc-regulated GTPase metalloprotein activator 1 (429 aa).

The short motif at 15–22 is the psi-PxLVp motif element; the sequence is GELPCLVT. GTP is bound at residue 78–85; the sequence is GYLGSGKS. C136, C138, and C139 together coordinate Zn(2+). Residues 136-139 carry the CXCC motif motif; that stretch reads CLCC. Residues 139 to 143 and 244 to 247 contribute to the GTP site; these read CSLKN and NKYD. The CobW C-terminal domain maps to 362–428; the sequence is RDWEVQRTKG…SIEELLRKTL (67 aa).

This sequence belongs to the SIMIBI class G3E GTPase family. ZNG1 subfamily.

The enzyme catalyses GTP + H2O = GDP + phosphate + H(+). Functionally, zinc chaperone that directly transfers zinc cofactor to target metalloproteins, thereby activating them. Catalyzes zinc insertion into the active site of methionine aminopeptidase MAP1, which function to cleave the initiator methionine from polypeptides during or after protein translation. Mechanistically, the N-terminal psi-PxLVp motif binds to the C6H2-type zinc finger of inactive form of MAP1. After formation of the docked complex, zinc is transferred from the CXCC motif in the GTPase domain of ZNG1 to the zinc binding site in the peptidase domain of MAP1 in a process requiring GTP hydrolysis. GTP/GDP exchange is required for release of active MAP1. The protein is Zinc-regulated GTPase metalloprotein activator 1 of Saccharomyces cerevisiae (strain ATCC 204508 / S288c) (Baker's yeast).